We begin with the raw amino-acid sequence, 621 residues long: uncharacterized protein (621 aa).

The protein resides in the plastid. It is found in the chloroplast. This is an uncharacterized protein from Porphyra purpurea (Red seaweed).